A 194-amino-acid polypeptide reads, in one-letter code: Imidazoleglycerol-phosphate dehydratase (194 aa).

This sequence belongs to the imidazoleglycerol-phosphate dehydratase family.

It is found in the cytoplasm. The enzyme catalyses D-erythro-1-(imidazol-4-yl)glycerol 3-phosphate = 3-(imidazol-4-yl)-2-oxopropyl phosphate + H2O. It functions in the pathway amino-acid biosynthesis; L-histidine biosynthesis; L-histidine from 5-phospho-alpha-D-ribose 1-diphosphate: step 6/9. This is Imidazoleglycerol-phosphate dehydratase from Streptococcus sanguinis (strain SK36).